The sequence spans 45 residues: MTKRTFQPNNRRRARKHGFRARMRTRAGRAILSARRGKNRAELSA.

Residues 1–45 are disordered; the sequence is MTKRTFQPNNRRRARKHGFRARMRTRAGRAILSARRGKNRAELSA. Basic residues predominate over residues 10-27; that stretch reads NRRRARKHGFRARMRTRA.

The protein belongs to the bacterial ribosomal protein bL34 family.

The protein is Large ribosomal subunit protein bL34 of Micrococcus luteus (strain ATCC 4698 / DSM 20030 / JCM 1464 / CCM 169 / CCUG 5858 / IAM 1056 / NBRC 3333 / NCIMB 9278 / NCTC 2665 / VKM Ac-2230) (Micrococcus lysodeikticus).